The primary structure comprises 439 residues: Ornithine aminotransferase, mitochondrial (439 aa).

The N-terminal 25 residues, 1–25 (MLSKLARLQTVAGLGLGVHSSVASA), are a transit peptide targeting the mitochondrion. N6-acetyllysine occurs at positions 49 and 66. Lysine 102 carries the N6-succinyllysine modification. Lysine 107 carries the post-translational modification N6-acetyllysine; alternate. Lysine 107 carries the N6-succinyllysine; alternate modification. Lysine 292 carries the N6-(pyridoxal phosphate)lysine modification. Lysine 362 carries the N6-acetyllysine; alternate modification. Lysine 362 is subject to N6-succinyllysine; alternate. Residues lysine 386 and lysine 392 each carry the N6-acetyllysine modification. At lysine 405 the chain carries N6-acetyllysine; alternate. Lysine 405 is subject to N6-succinyllysine; alternate. The residue at position 421 (lysine 421) is an N6-acetyllysine.

It belongs to the class-III pyridoxal-phosphate-dependent aminotransferase family. In terms of assembly, homohexamer. Requires pyridoxal 5'-phosphate as cofactor.

The protein resides in the mitochondrion matrix. The catalysed reaction is L-ornithine + 2-oxoglutarate = L-glutamate 5-semialdehyde + L-glutamate. It participates in amino-acid biosynthesis; L-proline biosynthesis; L-glutamate 5-semialdehyde from L-ornithine: step 1/1. Its function is as follows. Catalyzes the reversible interconversion of L-ornithine and 2-oxoglutarate to L-glutamate semialdehyde and L-glutamate. This is Ornithine aminotransferase, mitochondrial (OAT) from Bos taurus (Bovine).